A 254-amino-acid polypeptide reads, in one-letter code: Probable phosphatase Sbal_1472 (254 aa).

Zn(2+) is bound by residues His8, His10, His16, His41, Glu74, His102, His132, Asp193, and His195.

This sequence belongs to the PHP family. The cofactor is Zn(2+).

This chain is Probable phosphatase Sbal_1472, found in Shewanella baltica (strain OS155 / ATCC BAA-1091).